A 302-amino-acid chain; its full sequence is Cell division protein FtsQ (302 aa).

The tract at residues 1–41 (MPAVVRGGPPKPRRPRAEAPASPSKGKPAPRKAQPAAKLHA) is disordered. At 1-50 (MPAVVRGGPPKPRRPRAEAPASPSKGKPAPRKAQPAAKLHAARGVGLSPT) the chain is on the cytoplasmic side. The span at 18 to 38 (EAPASPSKGKPAPRKAQPAAK) shows a compositional bias: low complexity. Residues 51 to 71 (VALSVAGAALGLGLVVMLATG) traverse the membrane as a helical segment. The Periplasmic portion of the chain corresponds to 72–302 (HRAERLGASM…LPGQPAADGA (231 aa)). The region spanning 94-162 (FRLKTVHIRG…DTVLIAVEER (69 aa)) is the POTRA domain.

Belongs to the FtsQ/DivIB family. FtsQ subfamily.

The protein resides in the cell inner membrane. Essential cell division protein. This Caulobacter vibrioides (strain ATCC 19089 / CIP 103742 / CB 15) (Caulobacter crescentus) protein is Cell division protein FtsQ.